Here is a 238-residue protein sequence, read N- to C-terminus: Uridylate kinase (238 aa).

12–15 (KLSG) is a binding site for ATP. Residue glycine 54 participates in UMP binding. 2 residues coordinate ATP: glycine 55 and arginine 59. Residues aspartate 74 and 135–142 (TGNPFFTT) each bind UMP. Residues threonine 162, tyrosine 168, and aspartate 171 each contribute to the ATP site.

This sequence belongs to the UMP kinase family. Homohexamer.

The protein localises to the cytoplasm. It carries out the reaction UMP + ATP = UDP + ADP. Its pathway is pyrimidine metabolism; CTP biosynthesis via de novo pathway; UDP from UMP (UMPK route): step 1/1. Its activity is regulated as follows. Inhibited by UTP. In terms of biological role, catalyzes the reversible phosphorylation of UMP to UDP. The chain is Uridylate kinase from Dechloromonas aromatica (strain RCB).